Reading from the N-terminus, the 617-residue chain is Protein fem-1 homolog C (617 aa).

At M1 the chain carries N-acetylmethionine. 7 ANK repeats span residues 2 to 31, 40 to 70, 82 to 111, 115 to 144, 148 to 177, 181 to 210, and 213 to 242; these read DLKTAVFNAARDGKLRLLTKLLASKSKEEV, NGATPLLMAARYGHLDMVEFLLEQCSASIEV, EGAPPLWAASAAGHLKVVQSLLNHGASVNN, TNSTPLRAACFDGHLEIVKYLVEHKADLEV, HGHTCLMISCYKGHKEIAQYLLEKGADVNR, KGNTALHDCAESGSLDIMKMLLMYCAKMEK, and YGMTPLLSASVTGHTNIVDFLTHHAQTSKT. 2 TPR repeats span residues 245-279 and 338-371; these read INALELLGATFVDKKRDLLGALKYWKKAMNMRYSD and SYYIRYRGAVYADSGNFKRCINLWKYALDMQQSN. ANK repeat units follow at residues 481–523 and 527–556; these read NNFS…DVNV and DDNSPLHIAALNNHPDIMNLLIKSGAHFDA.

This sequence belongs to the fem-1 family. Component of a Cul2-RING (CRL2) E3 ubiquitin-protein ligase complex, also named ECS (Elongin BC-CUL2/5-SOCS-box protein) complex, composed of CUL2, Elongin BC (ELOB and ELOC), RBX1 and substrate-specific adapter FEM1C. In terms of tissue distribution, widely expressed. Highly expressed in kidney, cardiac tissue, skeletal muscle and testis. Expressed at lower levels in other tissues, including cartilage.

The protein operates within protein modification; protein ubiquitination. Its function is as follows. Substrate-recognition component of a Cul2-RING (CRL2) E3 ubiquitin-protein ligase complex of the DesCEND (destruction via C-end degrons) pathway, which recognizes a C-degron located at the extreme C terminus of target proteins, leading to their ubiquitination and degradation. The C-degron recognized by the DesCEND pathway is usually a motif of less than ten residues and can be present in full-length proteins, truncated proteins or proteolytically cleaved forms. The CRL2(FEM1C) complex specifically recognizes proteins with an arginine at the C-terminus: recognizes and binds proteins ending with -Lys/Arg-Xaa-Arg and -Lys/Arg-Xaa-Xaa-Arg C-degrons, such as SIL1 or OR51B2, leading to their ubiquitination and degradation. The CRL2(FEM1C) complex mediates ubiquitination and degradation of truncated MSRB1/SEPX1 selenoproteins produced by failed UGA/Sec decoding. Promotes ubiquitination and degradation of SLBP. The protein is Protein fem-1 homolog C of Homo sapiens (Human).